Consider the following 754-residue polypeptide: Bifunctional sesterterpene synthase astC (754 aa).

The signal sequence occupies residues 1-24; sequence MASLEVFVLYLRIFFISFMSRARS. The tract at residues 58-388 is sesterterpene synthase; sequence IQYRHSKLVD…RYHFHKPEHW (331 aa). Residues D149 and D153 each contribute to the Mg(2+) site. The interval 389-753 is geranylfarnesyl diphosphate synthase; the sequence is RQVENVDDDG…LRLLLKRLHV (365 aa). The segment covering 392–403 has biased composition (basic and acidic residues); sequence ENVDDDGNKSDD. Residues 392–414 form a disordered region; the sequence is ENVDDDGNKSDDSGIAMKDSPES. Residues D512 and D516 each contribute to the Mg(2+) site.

The protein in the N-terminal section; belongs to the terpene synthase family. This sequence in the C-terminal section; belongs to the FPP/GGPP synthase family. Mg(2+) serves as cofactor.

The catalysed reaction is (2E,6E,10E,14E)-geranylfarnesyl diphosphate = preasperterpenoid A + diphosphate. It participates in secondary metabolite biosynthesis; terpenoid biosynthesis. In terms of biological role, bifunctional sesterterpene synthase; part of the gene cluster that mediates the biosynthesis of the asperterpenoids, sesterterpenes that exhibit anti-tuberculosis activity. The first step of the pathway is performed by the sesterterpene synthase astC that possesses both prenyl transferase and terpene cyclase activity, converting isopentenyl diphosphate and dimethylallyl diphosphate into geranylfarnesyl diphosphate (GFPP) and further converting GFPP into preasperterpenoid A, respectively. The cytochrome P450 monooxygenase astB then dually oxidizes preasperterpenoid A to produce asperterpenoid A along with a minor product, asperterpenoid B. Finally, the cytochrome P450 monooxygenase astA converts asperterpenoid A into asperterpenoid C. In Talaromyces wortmannii (Penicillium wortmannii), this protein is Bifunctional sesterterpene synthase astC.